The primary structure comprises 270 residues: Probable ribosome biogenesis GTPase A (270 aa).

The region spanning 20–174 (HDQLKKLSSQ…LSDTPGVFLK (155 aa)) is the CP-type G domain. GTP is bound by residues 126–131 (NVGKSS) and G170.

This sequence belongs to the TRAFAC class YlqF/YawG GTPase family. MTG1 subfamily.

The protein localises to the cytoplasm. Its function is as follows. Required for a late step of 50S ribosomal subunit assembly. Has GTPase activity. Binds to the 23S rRNA. This Mycoplasma genitalium (strain ATCC 33530 / DSM 19775 / NCTC 10195 / G37) (Mycoplasmoides genitalium) protein is Probable ribosome biogenesis GTPase A (rbgA).